A 502-amino-acid polypeptide reads, in one-letter code: Probable cytosol aminopeptidase 2 (502 aa).

Residues lysine 269 and aspartate 274 each coordinate Mn(2+). Lysine 281 is an active-site residue. Mn(2+) contacts are provided by aspartate 292, aspartate 351, and glutamate 353. Arginine 355 is an active-site residue.

The protein belongs to the peptidase M17 family. Mn(2+) is required as a cofactor.

It localises to the cytoplasm. The catalysed reaction is Release of an N-terminal amino acid, Xaa-|-Yaa-, in which Xaa is preferably Leu, but may be other amino acids including Pro although not Arg or Lys, and Yaa may be Pro. Amino acid amides and methyl esters are also readily hydrolyzed, but rates on arylamides are exceedingly low.. The enzyme catalyses Release of an N-terminal amino acid, preferentially leucine, but not glutamic or aspartic acids.. Functionally, presumably involved in the processing and regular turnover of intracellular proteins. Catalyzes the removal of unsubstituted N-terminal amino acids from various peptides. The polypeptide is Probable cytosol aminopeptidase 2 (pepA2) (Shewanella oneidensis (strain ATCC 700550 / JCM 31522 / CIP 106686 / LMG 19005 / NCIMB 14063 / MR-1)).